The chain runs to 1328 residues: Protein turtle homolog B (1328 aa).

The first 17 residues, 1–17 (MIWYVATLIASVISTRG), serve as a signal peptide directing secretion. The Extracellular portion of the chain corresponds to 18-722 (LVAQGAHGLR…DLTDDGLARP (705 aa)). 5 Ig-like domains span residues 30 to 115 (PEFV…ECKV), 139 to 226 (PTFT…LLVQ), 228 to 320 (PPFI…AYLT), 324 to 415 (PARV…ARLV), and 420 to 504 (PYFT…THLT). Intrachain disulfides connect cysteine 45/cysteine 113 and cysteine 161/cysteine 208. Residues asparagine 241 and asparagine 258 are each glycosylated (N-linked (GlcNAc...) asparagine). 3 disulfides stabilise this stretch: cysteine 250–cysteine 303, cysteine 346–cysteine 397, and cysteine 442–cysteine 488. 2 consecutive Fibronectin type-III domains span residues 512-604 (APGS…TLAF) and 614-708 (LVTP…STDI). The N-linked (GlcNAc...) asparagine glycan is linked to asparagine 624. The helical transmembrane segment at 723 to 743 (VLAGIVATICFLAAAILFSTL) threads the bilayer. Topologically, residues 744–1328 (AACFVNKQRK…EPPTTLPTSG (585 aa)) are cytoplasmic. Disordered regions lie at residues 758 to 817 (RKKD…EKEL), 914 to 1040 (PMSS…PEPW), and 1106 to 1328 (KSPG…PTSG). 3 positions are modified to phosphoserine: serine 775, serine 783, and serine 794. Over residues 990–1001 (SPLSSVMSSPPL) the composition is skewed to low complexity. 3 stretches are compositionally biased toward polar residues: residues 1018-1033 (ENASNSTLPLTQTPTG), 1129-1141 (LVSQGQLRHTSQG), and 1199-1214 (SRLSPLTQSPLSSRTG). Arginine 1136 carries the post-translational modification Omega-N-methylarginine. 2 positions are modified to phosphoserine: serine 1207 and serine 1215. Positions 1246 to 1273 (SFSRKSTPSSTGSPSQSSRSGSPSYRPT) are enriched in low complexity. Pro residues-rich tracts occupy residues 1284–1295 (PSPPPGPAPPAP) and 1318–1328 (PEPPTTLPTSG).

This sequence belongs to the immunoglobulin superfamily. Turtle family. As to quaternary structure, found in a complex with MAGI2 and NLGN2, where it interacts with MAGI2 (via PDZ 5 and PDZ 6 domains). In terms of processing, N-glycosylated and sialylated. Not significantly O-glycosylated. As to expression, detected in brain.

The protein resides in the cell membrane. The protein localises to the postsynaptic cell membrane. It localises to the postsynaptic density. In terms of biological role, transmembrane protein which is abundantly expressed in interneurons, where it may regulate inhibitory synapse development. May mediate homophilic cell adhesion. The protein is Protein turtle homolog B of Mus musculus (Mouse).